We begin with the raw amino-acid sequence, 375 residues long: Paralyzed arrest at two-fold protein 6 (375 aa).

A disordered region spans residues 1-51 (MSTLGRSKTPSRDEPKKPGVFEKLSGTLSRKKKAPEDEHGNQGGAHHATDE). Basic and acidic residues predominate over residues 10 to 20 (PSRDEPKKPGV). Calponin-homology (CH) domains are found at residues 99–206 (AQVV…LHYR) and 266–373 (AHVK…TKYK).

The protein belongs to the parvin family. In terms of assembly, may interact (via calponin-homology (CH) 2 domain) with pat-4 (via kinase domain). May form a complex with unc-112 and pat-4. Component of an integrin containing attachment complex, composed of at least pat-2, pat-3, pat-4, pat-6, unc-52, unc-97 and unc-112. Expressed from 1.5 stage embryos, mostly within the muscle cells. In adult hermaphrodites, expressed in the attachments of other muscles, including the uterine, anal depressor, anal sphincter, and vulval muscles, as well as in the spermatheca and the distal tip cells. Expressed in mechanosensory receptor neurons ALML/R, PLML/R, AVM, and PVM. Localizes at body wall muscle attachments.

It is found in the cytoplasm. The protein localises to the cytoskeleton. Its subcellular location is the myofibril. The protein resides in the sarcomere. It localises to the m line. It is found in the perikaryon. The protein localises to the cell projection. Its subcellular location is the axon. Involved in the regulation of cell adhesion and cytoskeleton organization. Component of an integrin containing attachment complex, which is required for muscle development and maintenance. During embryonic development, required to recruit cpna-1, unc-89 and myofilaments to newly forming integrin attachments composed of integrins pat-2/pat-3, pat-4 and unc-112. Also required to reposition the integrin-based attachments so that they form the highly ordered array of dense body and M-line attachments that are characteristic of mature muscle cells. During the formation of neuromuscular junctions at the larval stage, negatively regulates membrane protrusion from body wall muscles. The chain is Paralyzed arrest at two-fold protein 6 from Caenorhabditis elegans.